The following is a 702-amino-acid chain: Elongation factor G (702 aa).

In terms of domain architecture, tr-type G spans cysteine 8–asparagine 290. GTP is bound by residues alanine 17–threonine 24, aspartate 88–histidine 92, and asparagine 142–aspartate 145.

Belongs to the TRAFAC class translation factor GTPase superfamily. Classic translation factor GTPase family. EF-G/EF-2 subfamily.

Its subcellular location is the cytoplasm. In terms of biological role, catalyzes the GTP-dependent ribosomal translocation step during translation elongation. During this step, the ribosome changes from the pre-translocational (PRE) to the post-translocational (POST) state as the newly formed A-site-bound peptidyl-tRNA and P-site-bound deacylated tRNA move to the P and E sites, respectively. Catalyzes the coordinated movement of the two tRNA molecules, the mRNA and conformational changes in the ribosome. This chain is Elongation factor G, found in Buchnera aphidicola subsp. Schizaphis graminum (strain Sg).